The chain runs to 694 residues: Elongation factor G (694 aa).

The region spanning 8 to 287 is the tr-type G domain; that stretch reads EDYRNFGIMA…AVVEFLPAPT (280 aa). Residues 17–24, 86–90, and 140–143 each bind GTP; these read AHIDAGKT, DTPGH, and NKMD.

This sequence belongs to the TRAFAC class translation factor GTPase superfamily. Classic translation factor GTPase family. EF-G/EF-2 subfamily.

Its subcellular location is the cytoplasm. In terms of biological role, catalyzes the GTP-dependent ribosomal translocation step during translation elongation. During this step, the ribosome changes from the pre-translocational (PRE) to the post-translocational (POST) state as the newly formed A-site-bound peptidyl-tRNA and P-site-bound deacylated tRNA move to the P and E sites, respectively. Catalyzes the coordinated movement of the two tRNA molecules, the mRNA and conformational changes in the ribosome. This is Elongation factor G from Brucella ovis (strain ATCC 25840 / 63/290 / NCTC 10512).